A 224-amino-acid chain; its full sequence is Putative adhesin A1C_06425 (224 aa).

Positions 1–22 are cleaved as a signal peptide; sequence MKKLLLIATTSATILSSSISFA.

This Rickettsia akari (strain Hartford) protein is Putative adhesin A1C_06425.